We begin with the raw amino-acid sequence, 398 residues long: Acetate kinase 1 (398 aa).

Residue N10 participates in Mg(2+) binding. K17 is a binding site for ATP. A substrate-binding site is contributed by R89. The active-site Proton donor/acceptor is D146. Residues 206-210 (HLGNG), 281-283 (DCR), and 329-333 (GIGEN) each bind ATP. E384 lines the Mg(2+) pocket.

It belongs to the acetokinase family. As to quaternary structure, homodimer. Requires Mg(2+) as cofactor. The cofactor is Mn(2+).

Its subcellular location is the cytoplasm. The catalysed reaction is acetate + ATP = acetyl phosphate + ADP. The protein operates within metabolic intermediate biosynthesis; acetyl-CoA biosynthesis; acetyl-CoA from acetate: step 1/2. Functionally, catalyzes the formation of acetyl phosphate from acetate and ATP. Can also catalyze the reverse reaction. The polypeptide is Acetate kinase 1 (Neisseria meningitidis serogroup B (strain ATCC BAA-335 / MC58)).